The primary structure comprises 408 residues: Peptidase T (408 aa).

Residue His81 coordinates Zn(2+). Residue Asp83 is part of the active site. Residue Asp142 participates in Zn(2+) binding. The Proton acceptor role is filled by Glu176. Zn(2+) contacts are provided by Glu177, Asp199, and His381.

The protein belongs to the peptidase M20B family. Zn(2+) is required as a cofactor.

It is found in the cytoplasm. The enzyme catalyses Release of the N-terminal residue from a tripeptide.. Functionally, cleaves the N-terminal amino acid of tripeptides. The chain is Peptidase T from Streptococcus gordonii (strain Challis / ATCC 35105 / BCRC 15272 / CH1 / DL1 / V288).